An 89-amino-acid polypeptide reads, in one-letter code: Small ribosomal subunit protein uS15 (89 aa).

This sequence belongs to the universal ribosomal protein uS15 family. In terms of assembly, part of the 30S ribosomal subunit. Forms a bridge to the 50S subunit in the 70S ribosome, contacting the 23S rRNA.

One of the primary rRNA binding proteins, it binds directly to 16S rRNA where it helps nucleate assembly of the platform of the 30S subunit by binding and bridging several RNA helices of the 16S rRNA. Its function is as follows. Forms an intersubunit bridge (bridge B4) with the 23S rRNA of the 50S subunit in the ribosome. The chain is Small ribosomal subunit protein uS15 from Acinetobacter baumannii (strain AB307-0294).